A 323-amino-acid chain; its full sequence is tRNA-modifying protein YgfZ (323 aa).

Positions 29 and 182 each coordinate folate.

Belongs to the tRNA-modifying YgfZ family.

The protein resides in the cytoplasm. Folate-binding protein involved in regulating the level of ATP-DnaA and in the modification of some tRNAs. It is probably a key factor in regulatory networks that act via tRNA modification, such as initiation of chromosomal replication. This is tRNA-modifying protein YgfZ from Vibrio cholerae serotype O1 (strain M66-2).